Consider the following 154-residue polypeptide: Myoglobin (154 aa).

Residues 2–148 (GLSDGEWELV…FRNDIAAKYK (147 aa)) enclose the Globin domain. S4 carries the post-translational modification Phosphoserine. Position 68 is a phosphothreonine (T68). Heme b is bound at residue H94.

It belongs to the globin family. Monomeric.

It localises to the cytoplasm. It is found in the sarcoplasm. It carries out the reaction Fe(III)-heme b-[protein] + nitric oxide + H2O = Fe(II)-heme b-[protein] + nitrite + 2 H(+). It catalyses the reaction H2O2 + AH2 = A + 2 H2O. In terms of biological role, monomeric heme protein which primary function is to store oxygen and facilitate its diffusion within muscle tissues. Reversibly binds oxygen through a pentacoordinated heme iron and enables its timely and efficient release as needed during periods of heightened demand. Depending on the oxidative conditions of tissues and cells, and in addition to its ability to bind oxygen, it also has a nitrite reductase activity whereby it regulates the production of bioactive nitric oxide. Under stress conditions, like hypoxia and anoxia, it also protects cells against reactive oxygen species thanks to its pseudoperoxidase activity. This chain is Myoglobin (MB), found in Loxodonta africana (African elephant).